The following is a 175-amino-acid chain: FMN reductase (NADH) RutF (175 aa).

Belongs to the non-flavoprotein flavin reductase family. RutF subfamily.

It catalyses the reaction FMNH2 + NAD(+) = FMN + NADH + 2 H(+). Catalyzes the reduction of FMN to FMNH2 which is used to reduce pyrimidine by RutA via the Rut pathway. The sequence is that of FMN reductase (NADH) RutF from Serratia proteamaculans (strain 568).